The sequence spans 776 residues: Protein SEY1 (776 aa).

Over 1-681 the chain is Cytoplasmic; the sequence is MADRSAIQLI…KRSIITTRTH (681 aa). One can recognise a GB1/RHD3-type G domain in the interval 34-263; the sequence is GLDYHVISVF…TENYYFKPQY (230 aa). GTP is bound at residue 44–51; it reads GSQSSGKS. A helical transmembrane segment spans residues 682–702; it reads IPPWIYVLLAVLGWNEFVAVI. Over 703 to 705 the chain is Lumenal; sequence RNP. The chain crosses the membrane as a helical span at residues 706-726; it reads LFVTLTLILGATFFVIHKFGL. At 727–776 the chain is on the cytoplasmic side; that stretch reads WGPVVNVVQSAVGETRTAIKDKLRQFVVEDHEVKESFEMKDFSKNEQKEK.

It belongs to the TRAFAC class dynamin-like GTPase superfamily. GB1/RHD3 GTPase family. RHD3 subfamily. In terms of assembly, interacts with RTN1 and YOP1; GTP binding is not required for these interactions.

It localises to the endoplasmic reticulum membrane. In terms of biological role, cooperates with the reticulon proteins RTN1 and RTN2 and the tubule-shaping DP1 family protein YOP1 to generate and maintain the structure of the tubular endoplasmic reticulum network. Has GTPase activity, which is required for its function in ER organization. The protein is Protein SEY1 of Saccharomyces cerevisiae (strain AWRI1631) (Baker's yeast).